Here is a 437-residue protein sequence, read N- to C-terminus: Sodium/bile acid cotransporter 4 (437 aa).

Residues 1-103 lie on the Extracellular side of the membrane; that stretch reads MDSLDNTTLL…PPFWDTPLNH (103 aa). Residues N6 and N20 are each glycosylated (N-linked (GlcNAc...) asparagine). The interval 15–79 is disordered; the sequence is SLLPDNLTLS…SSSLTVGVAG (65 aa). Polar residues predominate over residues 22 to 41; that stretch reads TLSPNAGSPSASTLSPLAVT. Positions 42-74 are enriched in low complexity; the sequence is SSPGPGLSLAPSPSIGFSPEATPTPEPTSSSLT. A helical transmembrane segment spans residues 104–124; that stretch reads GLNVFVGAALCITMLGLGCTV. The Cytoplasmic portion of the chain corresponds to 125-140; it reads DVNHFGAHVRRPVGAL. A helical transmembrane segment spans residues 141-161; the sequence is LAALCQFGFLPLLAFLLALIF. At 162-197 the chain is on the extracellular side; that stretch reads KLDEVAAVAVLLCGCCPGGNLSNLMSLLVDGDMNLS. N181 and N195 each carry an N-linked (GlcNAc...) asparagine glycan. Residues 198 to 218 form a helical membrane-spanning segment; the sequence is IIMTISSTLLALVLMPLCLWI. The Cytoplasmic portion of the chain corresponds to 219 to 233; sequence YSRAWINTPLVQLLP. A helical membrane pass occupies residues 234–254; the sequence is LGAVTLTLCSTLIPIGLGVFI. Topologically, residues 255-267 are extracellular; the sequence is RYKYNRVADYIVK. The chain crosses the membrane as a helical span at residues 268 to 288; that stretch reads VSLWSLLVTLVVLFIMTGTML. Topologically, residues 289–291 are cytoplasmic; sequence GPE. A helical membrane pass occupies residues 292 to 312; that stretch reads LLASIPATVYVVAIFMPLAGY. The Extracellular segment spans residues 313–360; the sequence is ASGYGLATLFHLPPNCKRTVCLETGSQNVQLCTAILKLAFPPRFIGSM. Residues 361–381 traverse the membrane as a helical segment; the sequence is YMFPLLYALFQSAEAGVFVLI. Residues 382-437 lie on the Cytoplasmic side of the membrane; that stretch reads YKMYGSEILHKREALDEDEDTDISYKKLKEEEMADTSYGTVGTDDLVMMETTQTAL.

Belongs to the bile acid:sodium symporter (BASS) (TC 2.A.28) family. Activated following N-terminal proteolytic cleavage by thrombin and/or proteases. Highest expression in the brain and significantly above background levels in the eye, prostate, and whole embryo tissue preparations.

The protein localises to the cell membrane. Transporter for bile acids. The polypeptide is Sodium/bile acid cotransporter 4 (Slc10a4) (Mus musculus (Mouse)).